Here is a 485-residue protein sequence, read N- to C-terminus: Trk system potassium uptake protein TrkG (485 aa).

Residues 1 to 5 (MNTSH) lie on the Cytoplasmic side of the membrane. The chain crosses the membrane as a helical span at residues 6–32 (VRVVTHMCGFLVWLYSLSMLPPMVVAL). At 33–38 (FYKEKS) the chain is on the periplasmic side. The chain crosses the membrane as a helical span at residues 39–60 (LFVFFITFVIFFCIGGGAWYTT). Residues 61 to 68 (KKSGIQLR) lie on the Cytoplasmic side of the membrane. A helical membrane pass occupies residues 69 to 93 (TRDGFIIIVMFWILFSVISAFPLWI). Positions 101-112 (FIDALFEGVSGI) form an intramembrane region, helical; Pore-forming. Residues 113-118 (TTTGAT) lie within the membrane without spanning it. The selectivity filter part 1 stretch occupies residues 113 to 118 (TTTGAT). K(+) contacts are provided by Thr-114 and Thr-115. The Periplasmic portion of the chain corresponds to 119–127 (VIDDVSSLP). A helical transmembrane segment spans residues 128–153 (RAYLYYRSQLNFIGGLGVIVLAVAVL). At 154-180 (PLLGIGGAKLYQSEMPGPFKDDKLTPR) the chain is on the cytoplasmic side. Residues 181–205 (LADTSRTLWITYSLLGIACIVCYRL) traverse the membrane as a helical segment. The Periplasmic portion of the chain corresponds to 206 to 208 (AGM). Pro-209 is an intramembrane region. Residues 210–221 (LFDAICHGISTV) constitute an intramembrane region (helical; Pore-forming). The stretch at 222–227 (SLGGFS) is an intramembrane region. The selectivity filter part 2 stretch occupies residues 222–227 (SLGGFS). Positions 223 and 224 each coordinate K(+). The Periplasmic segment spans residues 228–237 (THSESIGYFN). An intramembrane region (helical) is located at residues 238–253 (NYLVELVAGSFSLLSA). Residues 277-297 (LRFFLLIALGVIIVTSFQVWH) form a helical membrane-spanning segment. Positions 303-318 (LHGSFIHSFFLASSML) form an intramembrane region, helical; Pore-forming. The stretch at 319-324 (TDNGLA) is an intramembrane region. The interval 319–324 (TDNGLA) is selectivity filter part 3. Asp-320 and Asn-321 together coordinate K(+). At 325–332 (TQDYASWP) the chain is on the periplasmic side. Residues 333-344 (THTIVFLLLSSF) constitute an intramembrane region (helical). The segment at residues 345–357 (FGGCIGSTCGGIK) is an intramembrane region (note=Loop between two helices). A helical membrane pass occupies residues 392–419 (TDRVMRSVWSFFFLYTLFTVFFILVLNG). Over 420–421 (MG) the chain is Periplasmic. Residues 422-423 (YD) lie within the membrane without spanning it. The segment at residues 424–434 (FLTSFATVAAC) is an intramembrane region (helical; Pore-forming). An intramembrane segment occupies 435–441 (INNMGLG). A selectivity filter part 4 region spans residues 436–441 (NNMGLG). Positions 437 and 438 each coordinate K(+). Residues 442 to 453 (FGATASSFGVLN) are Periplasmic-facing. An intramembrane region (helical) is located at residues 454–465 (DIAKCLMCIAMI).

Belongs to the TrkH potassium transport family.

The protein resides in the cell inner membrane. In terms of biological role, low-affinity potassium transport system. Interacts with Trk system potassium uptake protein TrkA. Requires TrkE (sapD) for maximal transport activity, low activity is seen in its absence; no further stimulation is seen with SapF. Transport in the absence of SapD is dependent on a high membrane potential and a high cytoplasmic ATP concentration, suggesting this protein may be able to interact with other ATP-binding proteins. Can transport potassium and rubidium. The polypeptide is Trk system potassium uptake protein TrkG (trkG) (Escherichia coli (strain K12)).